The sequence spans 155 residues: Endoribonuclease YbeY (155 aa).

Residues histidine 120, histidine 124, and histidine 130 each contribute to the Zn(2+) site.

Belongs to the endoribonuclease YbeY family. Zn(2+) is required as a cofactor.

The protein localises to the cytoplasm. Functionally, single strand-specific metallo-endoribonuclease involved in late-stage 70S ribosome quality control and in maturation of the 3' terminus of the 16S rRNA. The sequence is that of Endoribonuclease YbeY from Staphylococcus epidermidis (strain ATCC 35984 / DSM 28319 / BCRC 17069 / CCUG 31568 / BM 3577 / RP62A).